A 65-amino-acid chain; its full sequence is Small ribosomal subunit protein bS21B (65 aa).

The protein belongs to the bacterial ribosomal protein bS21 family.

In Geobacter sulfurreducens (strain ATCC 51573 / DSM 12127 / PCA), this protein is Small ribosomal subunit protein bS21B.